The sequence spans 503 residues: Angiopoietin-4 (503 aa).

The N-terminal stretch at 1–24 is a signal peptide; that stretch reads MLSQLAMLQGSLLLVVATMSVAQQ. Residues 84-238 are a coiled coil; it reads TQQVKQLEQA…RQSAALTNIE (155 aa). N-linked (GlcNAc...) asparagine glycosylation is found at asparagine 96, asparagine 126, asparagine 140, asparagine 158, asparagine 247, asparagine 274, asparagine 311, asparagine 337, and asparagine 427. The 221-residue stretch at 282 to 502 folds into the Fibrinogen C-terminal domain; sequence MAGEQVFQDC…ASRMMIRPLD (221 aa). A disulfide bridge connects residues cysteine 291 and cysteine 320. Residues cysteine 444 and cysteine 457 are joined by a disulfide bond.

As to quaternary structure, homodimer; disulfide-linked. Interacts with TEK/TIE2. Highly expressed in the lung with much lower levels found in other tissues.

It is found in the secreted. Functionally, binds to TEK/TIE2, modulating ANGPT1 signaling. Can induce tyrosine phosphorylation of TEK/TIE2. Promotes endothelial cell survival, migration and angiogenesis. The polypeptide is Angiopoietin-4 (ANGPT4) (Homo sapiens (Human)).